The sequence spans 231 residues: ADP-ribosylation factor-like protein 6-interacting protein 4 (231 aa).

The span at 1 to 19 (MAHVSSRKRSRSRSRSRGR) shows a compositional bias: basic residues. The interval 1–154 (MAHVSSRKRS…EDNDGPVLTD (154 aa)) is disordered. Positions 20 to 34 (RGSEKRSKRSSKDSS) are enriched in basic and acidic residues. The span at 64–89 (TSRSSSSSSSSSSSSSSSSTSSSSSS) shows a compositional bias: low complexity. The segment covering 92 to 119 (RKKRGKHKDKKKRKKKKKRKKKMKRKGK) has biased composition (basic residues). Residues Ser142 and Ser176 each carry the phosphoserine modification. Residue Lys193 forms a Glycyl lysine isopeptide (Lys-Gly) (interchain with G-Cter in SUMO2) linkage.

The protein belongs to the ARL6IP4 family. Interacts with ARL6. Interacts with ZCCHC17. Interacts with SRSF2.

It is found in the nucleus. The protein localises to the nucleolus. It localises to the nucleus speckle. In terms of biological role, involved in modulating alternative pre-mRNA splicing with either 5' distal site activation or preferential use of 3' proximal site. This chain is ADP-ribosylation factor-like protein 6-interacting protein 4 (Arl6ip4), found in Rattus norvegicus (Rat).